The following is a 90-amino-acid chain: UPF0223 protein lmo1058 (90 aa).

The protein belongs to the UPF0223 family.

This chain is UPF0223 protein lmo1058, found in Listeria monocytogenes serovar 1/2a (strain ATCC BAA-679 / EGD-e).